Consider the following 160-residue polypeptide: Globin CTT-Y (160 aa).

Positions 1–16 (MKVLAIFALCIIGALA) are cleaved as a signal peptide. One can recognise a Globin domain in the interval 17 to 160 (TPCDDFKIMQ…IRKVINANLE (144 aa)). The heme b site is built by histidine 74 and histidine 109.

Belongs to the globin family.

The polypeptide is Globin CTT-Y (CTT-Y) (Chironomus thummi piger (Midge)).